The following is a 29-amino-acid chain: Conotoxin SIVC (29 aa).

Ala1 is modified (N-acetylalanine; partial). Pro2 bears the 4-hydroxyproline mark. Residues Thr7 and Thr9 are each glycosylated (O-linked (HexNAc...) threonine). Pro18 and Pro22 each carry 4-hydroxyproline. Cys29 bears the Cysteine amide mark.

It belongs to the conotoxin A superfamily. O-linked glycans consist of Hex4-HexNAc2 hexasaccharides. Post-translationally, N-terminus is found to be free and N-acetylated, depending on the fraction studied. In terms of processing, contains 3 disulfide bonds. As to expression, expressed by the venom duct. Low expression in the distal venom duct sections.

The protein localises to the secreted. In terms of biological role, probable neurotoxin with ion channel inhibitor activity. The sequence is that of Conotoxin SIVC from Conus striatus (Striated cone).